We begin with the raw amino-acid sequence, 1160 residues long: Nck-associated protein 1 homolog (1160 aa).

This sequence belongs to the HEM-1/HEM-2 family. Part of a Scar/WAVE complex containing brk1, scrA, abiA, pirA and napA.

Its function is as follows. Involved in regulation of actin and microtubule organization. Involved in cell adhesion. The polypeptide is Nck-associated protein 1 homolog (napA) (Dictyostelium discoideum (Social amoeba)).